The primary structure comprises 478 residues: Cell division protein FtsZ homolog 2-1, chloroplastic (478 aa).

The disordered stretch occupies residues 86 to 112; it reads EGTSTIVNPRKETSSGPVVEDFEEPSA. 128-132 contacts GTP; the sequence is GGGSN. Phosphoserine; by PGK1 is present on serine 143. Residues 217 to 219, glutamate 248, and arginine 252 each bind GTP; that span reads GTG. The residue at position 286 (threonine 286) is a Phosphothreonine; by PGK1. Aspartate 296 is a binding site for GTP.

Belongs to the FtsZ family. Aggregates to form a contractile ring-like structure; contraction of the ring was accompanied by an increase in the filament turnover rate. Self-interacts and binds to FTSZ1 in heteromers to form two morphologically distinct types of filaments, termed type-I (smooth filaments) and -II (rough filaments), in a GTP-dependent manner; the GDP-induced disassembly is inhibited by ARC6. Interacts (via C-terminus) with ARC6; this interaction enables ARC3 binding to FTSZ2. Part of a complex made of ARC3, ARC6, FTSZ1 and FTSZ2. Binds to MCD1 in an ARC6-dependent manner. Binds to CDP1/PARC6. Part of a complex made of CDP1/PARC6, ARC3 and FtsZ proteins in the middle of the plastid; this complex enhances the dynamics of Z rings during chloroplast division. Binds to PGK1. Filaments containing FTSZ2-1 are stabilized when in complex with GTP but destabilized after conversion of GTP into GDP; ARC6 conteracts this destabilisation by preventing the dissociation of GDP-bound FTSZ2 molecules thus inhibiting filament disassembly whereas ARC3 promotes GTPase activity thus accelerating the conversion of GTP into GDP and triggering FtsZ2 filaments disassembly. In terms of processing, phosphorylation at Ser-143 is necessary for interactions with ARC3, ARC6, FTSZ1 and FTSZ2-2. Phosphorylations at Ser-143 and Thr-286 are required for the formation of contractile ring at the chloroplast midpoint.

The protein localises to the plastid. Its subcellular location is the chloroplast stroma. The protein resides in the chloroplast thylakoid membrane. GTPase activity is enhanced by ARC3. Functionally, exhibits GTPase activity which converts GTP ligands to GDP. Component of the plastid division machinery consisting in a binary fission accomplished by the simultaneous constriction of the FtsZ ring on the stromal side of the inner envelope membrane, and the ARC5 ring on the cytosolic side of the outer envelope membrane. Required for plastid division in a dose-dependent manner. In the vegetative shoot apex, at the shoot apical meristem (SAM), where the proplastid-to-chloroplast transition takes place, major contributor of plastid division in the L1 and L3 layers and contributes equally with FTSZ1 in the L2 layer. This is Cell division protein FtsZ homolog 2-1, chloroplastic from Arabidopsis thaliana (Mouse-ear cress).